A 419-amino-acid polypeptide reads, in one-letter code: Carboxypeptidase A1 (419 aa).

Residues 1–16 form the signal peptide; the sequence is MKRLLVLSVLLAAVFG. A propeptide spans 17-110 (activation peptide); that stretch reads NENFVGHQVL…KQQMSAFQAR (94 aa). One can recognise a Peptidase M14 domain in the interval 121–414; the sequence is TYHTLDEIYE…LALLTIMDHT (294 aa). 2 residues coordinate Zn(2+): H179 and E182. Substrate contacts are provided by residues 179–182, R237, and 254–255; these read HSRE and NR. A disulfide bridge links C248 with C271. H306 lines the Zn(2+) pocket. Substrate is bound by residues 307–308 and Y358; that span reads SY. The Proton donor/acceptor role is filled by E380.

It belongs to the peptidase M14 family. As to quaternary structure, monomer. Zn(2+) is required as a cofactor.

The protein localises to the secreted. It catalyses the reaction Release of a C-terminal amino acid, but little or no action with -Asp, -Glu, -Arg, -Lys or -Pro.. Functionally, carboxypeptidase that catalyzes the release of a C-terminal amino acid, but has little or no action with -Asp, -Glu, -Arg, -Lys or -Pro. In Mus musculus (Mouse), this protein is Carboxypeptidase A1 (Cpa1).